The following is a 177-amino-acid chain: Large ribosomal subunit protein uL6 (177 aa).

The protein belongs to the universal ribosomal protein uL6 family. In terms of assembly, part of the 50S ribosomal subunit.

Its function is as follows. This protein binds to the 23S rRNA, and is important in its secondary structure. It is located near the subunit interface in the base of the L7/L12 stalk, and near the tRNA binding site of the peptidyltransferase center. This chain is Large ribosomal subunit protein uL6, found in Albidiferax ferrireducens (strain ATCC BAA-621 / DSM 15236 / T118) (Rhodoferax ferrireducens).